A 311-amino-acid chain; its full sequence is tRNA dimethylallyltransferase (311 aa).

12-19 (GPTASGKT) provides a ligand contact to ATP. 14 to 19 (TASGKT) contacts substrate. 2 interaction with substrate tRNA regions span residues 37-40 (DSAM) and 161-165 (QRIQR).

Belongs to the IPP transferase family. As to quaternary structure, monomer. Requires Mg(2+) as cofactor.

The enzyme catalyses adenosine(37) in tRNA + dimethylallyl diphosphate = N(6)-dimethylallyladenosine(37) in tRNA + diphosphate. Catalyzes the transfer of a dimethylallyl group onto the adenine at position 37 in tRNAs that read codons beginning with uridine, leading to the formation of N6-(dimethylallyl)adenosine (i(6)A). In Coxiella burnetii (strain Dugway 5J108-111), this protein is tRNA dimethylallyltransferase.